The primary structure comprises 161 residues: Crossover junction endodeoxyribonuclease RuvC (161 aa).

Residues D7, E67, and D140 contribute to the active site. Positions 7, 67, and 140 each coordinate Mg(2+).

It belongs to the RuvC family. Homodimer which binds Holliday junction (HJ) DNA. The HJ becomes 2-fold symmetrical on binding to RuvC with unstacked arms; it has a different conformation from HJ DNA in complex with RuvA. In the full resolvosome a probable DNA-RuvA(4)-RuvB(12)-RuvC(2) complex forms which resolves the HJ. The cofactor is Mg(2+).

The protein resides in the cytoplasm. It carries out the reaction Endonucleolytic cleavage at a junction such as a reciprocal single-stranded crossover between two homologous DNA duplexes (Holliday junction).. Its function is as follows. The RuvA-RuvB-RuvC complex processes Holliday junction (HJ) DNA during genetic recombination and DNA repair. Endonuclease that resolves HJ intermediates. Cleaves cruciform DNA by making single-stranded nicks across the HJ at symmetrical positions within the homologous arms, yielding a 5'-phosphate and a 3'-hydroxyl group; requires a central core of homology in the junction. The consensus cleavage sequence is 5'-(A/T)TT(C/G)-3'. Cleavage occurs on the 3'-side of the TT dinucleotide at the point of strand exchange. HJ branch migration catalyzed by RuvA-RuvB allows RuvC to scan DNA until it finds its consensus sequence, where it cleaves and resolves the cruciform DNA. The protein is Crossover junction endodeoxyribonuclease RuvC of Natranaerobius thermophilus (strain ATCC BAA-1301 / DSM 18059 / JW/NM-WN-LF).